Consider the following 608-residue polypeptide: Dextranase (608 aa).

An N-terminal signal peptide occupies residues M1–I19. A propeptide spanning residues G20–H34 is cleaved from the precursor. N-linked (GlcNAc...) asparagine glycans are attached at residues N39, N571, and N574.

Belongs to the glycosyl hydrolase 49 family. In terms of processing, N-glycosylated.

It is found in the secreted. It carries out the reaction Endohydrolysis of (1-&gt;6)-alpha-D-glucosidic linkages in dextran.. This Talaromyces minioluteus (Filamentous fungus) protein is Dextranase (DEX).